The following is a 511-amino-acid chain: Apolipoprotein N-acyltransferase (511 aa).

The next 6 membrane-spanning stretches (helical) occupy residues 7-29 (PGWP…LAPF), 58-78 (GWWY…VSIH), 90-110 (LLML…AWLW), 125-145 (LAFA…LTGF), 163-183 (VPVG…ALLV), and 192-212 (GASL…GLYL). One can recognise a CN hydrolase domain in the interval 230–470 (IQGNIAQELK…QGILRGEVIP (241 aa)). Glutamate 269 functions as the Proton acceptor in the catalytic mechanism. Lysine 330 is a catalytic residue. Cysteine 382 serves as the catalytic Nucleophile. A helical transmembrane segment spans residues 482–502 (VWPLAGLAGVLLLWALLGRQL).

The protein belongs to the CN hydrolase family. Apolipoprotein N-acyltransferase subfamily.

It localises to the cell inner membrane. The catalysed reaction is N-terminal S-1,2-diacyl-sn-glyceryl-L-cysteinyl-[lipoprotein] + a glycerophospholipid = N-acyl-S-1,2-diacyl-sn-glyceryl-L-cysteinyl-[lipoprotein] + a 2-acyl-sn-glycero-3-phospholipid + H(+). The protein operates within protein modification; lipoprotein biosynthesis (N-acyl transfer). Its function is as follows. Catalyzes the phospholipid dependent N-acylation of the N-terminal cysteine of apolipoprotein, the last step in lipoprotein maturation. The polypeptide is Apolipoprotein N-acyltransferase (Pseudomonas aeruginosa (strain ATCC 15692 / DSM 22644 / CIP 104116 / JCM 14847 / LMG 12228 / 1C / PRS 101 / PAO1)).